The sequence spans 385 residues: Lipid-A-disaccharide synthase (385 aa).

The protein belongs to the LpxB family.

It catalyses the reaction a lipid X + a UDP-2-N,3-O-bis[(3R)-3-hydroxyacyl]-alpha-D-glucosamine = a lipid A disaccharide + UDP + H(+). The protein operates within bacterial outer membrane biogenesis; LPS lipid A biosynthesis. Functionally, condensation of UDP-2,3-diacylglucosamine and 2,3-diacylglucosamine-1-phosphate to form lipid A disaccharide, a precursor of lipid A, a phosphorylated glycolipid that anchors the lipopolysaccharide to the outer membrane of the cell. This chain is Lipid-A-disaccharide synthase, found in Xylella fastidiosa (strain M12).